The chain runs to 118 residues: Large ribosomal subunit protein uL18 (118 aa).

It belongs to the universal ribosomal protein uL18 family. Part of the 50S ribosomal subunit; part of the 5S rRNA/L5/L18/L25 subcomplex. Contacts the 5S and 23S rRNAs.

Functionally, this is one of the proteins that bind and probably mediate the attachment of the 5S RNA into the large ribosomal subunit, where it forms part of the central protuberance. In Sulfurovum sp. (strain NBC37-1), this protein is Large ribosomal subunit protein uL18.